Reading from the N-terminus, the 542-residue chain is Berberine bridge enzyme-like 25 (542 aa).

An N-terminal signal peptide occupies residues 1–30 (MGNSKPLPTISCISVFALYFSFYTITLTSS). A disulfide bond links Cys-40 and Cys-104. Asn-61 carries an N-linked (GlcNAc...) asparagine glycan. The FAD-binding PCMH-type domain occupies 82 to 258 (TMPKPGFIFK…LSWKIKLVPV (177 aa)). A Pros-8alpha-FAD histidine modification is found at His-119. N-linked (GlcNAc...) asparagine glycans are attached at residues Asn-308 and Asn-436.

Belongs to the oxygen-dependent FAD-linked oxidoreductase family. FAD is required as a cofactor.

Its subcellular location is the secreted. The protein localises to the cell wall. The sequence is that of Berberine bridge enzyme-like 25 from Arabidopsis thaliana (Mouse-ear cress).